A 181-amino-acid chain; its full sequence is Adenine phosphoribosyltransferase (181 aa).

This sequence belongs to the purine/pyrimidine phosphoribosyltransferase family. Homodimer.

The protein localises to the cytoplasm. The enzyme catalyses AMP + diphosphate = 5-phospho-alpha-D-ribose 1-diphosphate + adenine. It participates in purine metabolism; AMP biosynthesis via salvage pathway; AMP from adenine: step 1/1. Catalyzes a salvage reaction resulting in the formation of AMP, that is energically less costly than de novo synthesis. The chain is Adenine phosphoribosyltransferase from Aeromonas salmonicida (strain A449).